Here is a 184-residue protein sequence, read N- to C-terminus: Photosystem I assembly protein Ycf4 (184 aa).

2 helical membrane passes run 22-42 (FFWAFILFLGSLGFLLVGTSS) and 57-77 (IIFFPQGIVMSFYGIAGLFIS).

The protein belongs to the Ycf4 family.

It is found in the plastid. The protein localises to the chloroplast thylakoid membrane. Seems to be required for the assembly of the photosystem I complex. The sequence is that of Photosystem I assembly protein Ycf4 from Aethionema cordifolium (Lebanon stonecress).